Reading from the N-terminus, the 802-residue chain is Leucine--tRNA ligase (802 aa).

The 'HIGH' region motif lies at 39-50 (PYPSGAGLHVGH). Positions 574–578 (KMSKS) match the 'KMSKS' region motif. Position 577 (lysine 577) interacts with ATP.

This sequence belongs to the class-I aminoacyl-tRNA synthetase family.

It localises to the cytoplasm. It catalyses the reaction tRNA(Leu) + L-leucine + ATP = L-leucyl-tRNA(Leu) + AMP + diphosphate. The protein is Leucine--tRNA ligase of Macrococcus caseolyticus (strain JCSC5402) (Macrococcoides caseolyticum).